An 847-amino-acid polypeptide reads, in one-letter code: Glucans biosynthesis glucosyltransferase H (847 aa).

Residues 1–138 (MNKTTEYIDA…KWRTVGTIRR (138 aa)) lie on the Cytoplasmic side of the membrane. A helical membrane pass occupies residues 139-156 (YILLILTLAQTVVATWYM). The Periplasmic portion of the chain corresponds to 157-193 (KTILPYQGWALINPMDMVGQDVWVSFMQLLPYMLQTG). Residues 194 to 216 (ILILFAVLFCWVSAGFWTALMGF) traverse the membrane as a helical segment. The Cytoplasmic segment spans residues 217–511 (LQLLIGRDKY…LVKGMHPVHR (295 aa)). The helical transmembrane segment at 512–534 (AVFLTGVMSYLSAPLWFMFLALS) threads the bilayer. Residues 535–567 (TALQVVHALTEPQYFLQPRQLFPVWPQWRPELA) are Periplasmic-facing. The helical transmembrane segment at 568–590 (IALFASTMVLLFLPKLLSILLIW) threads the bilayer. Over 591–602 (CKGTKEYGGFWR) the chain is Cytoplasmic. A helical membrane pass occupies residues 603-625 (VTLSLLLEVLFSVLLAPVRMLFH). Over 626 to 679 (TVFVVSAFLGWEVVWNSPQRDDDSTSWGEAFKRHGSQLLLGLVWAVGMAWLDLR) the chain is Periplasmic. A helical transmembrane segment spans residues 680 to 702 (FLFWLAPIVFSLILSPFVSVISS). The Cytoplasmic portion of the chain corresponds to 703–847 (RATVGLRTKR…ALRKPDAASQ (145 aa)).

This sequence belongs to the glycosyltransferase 2 family. OpgH subfamily.

It is found in the cell inner membrane. The protein operates within glycan metabolism; osmoregulated periplasmic glucan (OPG) biosynthesis. Its function is as follows. Involved in the biosynthesis of osmoregulated periplasmic glucans (OPGs). The sequence is that of Glucans biosynthesis glucosyltransferase H from Escherichia coli O6:H1 (strain CFT073 / ATCC 700928 / UPEC).